Reading from the N-terminus, the 219-residue chain is Cytidylate kinase (219 aa).

Position 15–23 (15–23 (GPAASGKGT)) interacts with ATP.

The protein belongs to the cytidylate kinase family. Type 1 subfamily.

It localises to the cytoplasm. The catalysed reaction is CMP + ATP = CDP + ADP. It carries out the reaction dCMP + ATP = dCDP + ADP. This is Cytidylate kinase from Brucella melitensis biotype 2 (strain ATCC 23457).